We begin with the raw amino-acid sequence, 378 residues long: Inner membrane protein YibH (378 aa).

The Periplasmic portion of the chain corresponds to 1–3 (MDL). The chain crosses the membrane as a helical span at residues 4-24 (LIVLTYVALAWAVFKIFRIPV). At 25–26 (NQ) the chain is on the cytoplasmic side. Residues 27-47 (WTLATAALGGVFLVSGLILLM) form a helical membrane-spanning segment. Residues 48–54 (NYNHPYT) lie on the Periplasmic side of the membrane. A helical transmembrane segment spans residues 55–75 (FTAQKAVIAIPITPQVTGIVT). Over 76–232 (EVTDKNNQLI…RAPSNGYVTQ (157 aa)) the chain is Cytoplasmic. The chain crosses the membrane as a helical span at residues 233 to 253 (VLIRPGTYAAALPLRPVMVFI). Over 254 to 280 (PEQKRQIVAQFRQNSLLRLKPGDDAEV) the chain is Periplasmic. Residues 281 to 301 (VFNALPGQVFHGKLTSILPVV) form a helical membrane-spanning segment. The Cytoplasmic segment spans residues 302-309 (PGGSYQAQ). The chain crosses the membrane as a helical span at residues 310–330 (GVLQSLTVVPGTDGVLGTIEL). The Periplasmic segment spans residues 331-378 (DPNDDIDALPDGIYAQVAVYSDHFSHVSVMRKVLLRMTSWMHYLYLDH).

The protein belongs to the membrane fusion protein (MFP) (TC 8.A.1) family.

It localises to the cell inner membrane. The sequence is that of Inner membrane protein YibH (yibH) from Escherichia coli O157:H7.